Consider the following 655-residue polypeptide: Protein-glucosylgalactosylhydroxylysine glucosidase (655 aa).

258-259 (WD) is a substrate binding site. E388 acts as the Proton donor in catalysis. Substrate is bound at residue 456–457 (KQ).

This sequence belongs to the glycosyl hydrolase 65 family.

It carries out the reaction (5R)-5-O-[alpha-D-glucosyl-(1-&gt;2)-beta-D-galactosyl]-5-hydroxy-L-lysyl-[collagen] + H2O = (5R)-5-O-(beta-D-galactosyl)-5-hydroxy-L-lysyl-[collagen] + D-glucose. Catalyzes the hydrolysis of glucose from the disaccharide unit linked to hydroxylysine residues of collagen and collagen-like proteins. In Danio rerio (Zebrafish), this protein is Protein-glucosylgalactosylhydroxylysine glucosidase.